The sequence spans 150 residues: Snaclec 7 (150 aa).

Positions 1–23 (MGRFISISFGLLVVFLSLSGTGA) are cleaved as a signal peptide. 3 disulfides stabilise this stretch: Cys27–Cys38, Cys55–Cys144, and Cys121–Cys136. The 112-residue stretch at 34 to 145 (YEGYCYKVFN…CNDPRYFVCK (112 aa)) folds into the C-type lectin domain.

It belongs to the snaclec family. In terms of assembly, heterodimer; disulfide-linked.

It is found in the secreted. Its function is as follows. Interferes with one step of hemostasis (modulation of platelet aggregation, or coagulation cascade, for example). In Daboia siamensis (Eastern Russel's viper), this protein is Snaclec 7.